Here is a 257-residue protein sequence, read N- to C-terminus: Tryptophan synthase alpha chain (257 aa).

Catalysis depends on proton acceptor residues E46 and D57.

The protein belongs to the TrpA family. In terms of assembly, tetramer of two alpha and two beta chains.

The catalysed reaction is (1S,2R)-1-C-(indol-3-yl)glycerol 3-phosphate + L-serine = D-glyceraldehyde 3-phosphate + L-tryptophan + H2O. It functions in the pathway amino-acid biosynthesis; L-tryptophan biosynthesis; L-tryptophan from chorismate: step 5/5. Its function is as follows. The alpha subunit is responsible for the aldol cleavage of indoleglycerol phosphate to indole and glyceraldehyde 3-phosphate. This is Tryptophan synthase alpha chain from Parabacteroides distasonis (strain ATCC 8503 / DSM 20701 / CIP 104284 / JCM 5825 / NCTC 11152).